Consider the following 199-residue polypeptide: Sulfocyanin (199 aa).

The chain crosses the membrane as a helical; Signal-anchor for type II membrane protein span at residues 7–27 (VLPVVVGILVVIIAVAVGVYV). The Plastocyanin-like domain occupies 79–188 (NFNGTSSGSL…SGMWAVLVAS (110 aa)). Residues H110, C171, H176, and M181 each coordinate Cu cation.

Belongs to the multicopper oxidase family.

The protein resides in the cell membrane. In terms of biological role, the 4 redox proteins SoxE, SoxF, SoxG and SoxH probably form part of a membrane respiratory complex together with SoxM, a catalytic subunit of cytochrome oxidase. The polypeptide is Sulfocyanin (soxE) (Sulfolobus acidocaldarius (strain ATCC 33909 / DSM 639 / JCM 8929 / NBRC 15157 / NCIMB 11770)).